The primary structure comprises 218 residues: MKTIANESSLLDTKVPEPTLRRLPWYLSYVQLLHADGCESVSSTRIARAVGVDASLVAKDLSYVSVDGRTRVGYRVADMVAVLNDFLGFTHHHRAFLFGVGSLGAALLQDSGLRHFGLEIAAGFDVNPDIVDTNINGIPVYHKSRVAELCARERVDIGILTVPIRAAQSMADEMIAAGIKAIWNFTPWRISVPEGVVVQNTSMYAQLAVMFNRMKSLP.

Positions 25-64 (WYLSYVQLLHADGCESVSSTRIARAVGVDASLVAKDLSYV) form a DNA-binding region, H-T-H motif. 99–104 (GVGSLG) is a binding site for NAD(+).

This sequence belongs to the transcriptional regulatory Rex family. In terms of assembly, homodimer.

The protein localises to the cytoplasm. Functionally, modulates transcription in response to changes in cellular NADH/NAD(+) redox state. This is Redox-sensing transcriptional repressor Rex from Porphyromonas gingivalis (strain ATCC 33277 / DSM 20709 / CIP 103683 / JCM 12257 / NCTC 11834 / 2561).